We begin with the raw amino-acid sequence, 388 residues long: DNA replication and repair protein RecF (388 aa).

Position 30–37 (30–37) interacts with ATP; the sequence is GNNAQGKS.

The protein belongs to the RecF family.

Its subcellular location is the cytoplasm. Its function is as follows. The RecF protein is involved in DNA metabolism; it is required for DNA replication and normal SOS inducibility. RecF binds preferentially to single-stranded, linear DNA. It also seems to bind ATP. The polypeptide is DNA replication and repair protein RecF (Picosynechococcus sp. (strain ATCC 27264 / PCC 7002 / PR-6) (Agmenellum quadruplicatum)).